Consider the following 220-residue polypeptide: MADS-box protein AGL24 (220 aa).

The region spanning 1–61 (MAREKIRIKK…GKLFEFSSSR (61 aa)) is the MADS-box domain. The 91-residue stretch at 87-177 (LRLENCNLSR…RDKLETLERA (91 aa)) folds into the K-box domain. The segment covering 190–200 (SVTTNVSSYDS) has biased composition (polar residues). Positions 190-220 (SVTTNVSSYDSGTPLEDDSDTSLKLGLPSWE) are disordered.

In terms of assembly, interacts with IMK3/MRLK. Forms a homodimer and heterodimer with SOC1, AP1 and SVP through MADS-box domain. Interacts with the SEU-LUG corepressor complex when complexed to AP1. Interacts with AGL15 and AGL16. In terms of processing, phosphorylated by IMK3. Induced by vernalization. As to expression, mostly expressed in shoot apical meristems, including floral meristems. Also detected in stems, seedlings, leaves, flowers and siliques, and, to a lower extent, in roots.

Its subcellular location is the nucleus. The protein localises to the cytoplasm. Functionally, transcription activator that mediates floral transition in response to vernalization. Promotes inflorescence fate in apical meristems. Acts in a dosage-dependent manner. Probably involved in the transduction of RLK-mediated signaling (e.g. IMK3 pathway). Together with AP1 and SVP, controls the identity of the floral meristem and regulates expression of class B, C and E genes. When associated with SOC1, mediates effect of gibberellins on flowering under short-day conditions, and regulates the expression of LEAFY (LFY), which links floral induction and floral development. Confers inflorescence characteristics to floral primordia and early flowering. In Arabidopsis thaliana (Mouse-ear cress), this protein is MADS-box protein AGL24 (AGL24).